A 57-amino-acid polypeptide reads, in one-letter code: MAEVRLGENETIESALRRFKKKIQKAGILPEVRRREHYEKPSQRRKRKLEASRRRRR.

Basic and acidic residues predominate over residues 32-42 (VRRREHYEKPS). A disordered region spans residues 32-57 (VRRREHYEKPSQRRKRKLEASRRRRR). A compositionally biased stretch (basic residues) spans 43 to 57 (QRRKRKLEASRRRRR).

It belongs to the bacterial ribosomal protein bS21 family.

The sequence is that of Small ribosomal subunit protein bS21 from Synechococcus elongatus (strain ATCC 33912 / PCC 7942 / FACHB-805) (Anacystis nidulans R2).